A 161-amino-acid polypeptide reads, in one-letter code: Arachidonate 5-lipoxygenase-activating protein (161 aa).

The Lumenal portion of the chain corresponds to Met1–Asn8. Residues Ile9–Val30 traverse the membrane as a helical segment. At Glu31–Arg52 the chain is on the cytoplasmic side. The helical transmembrane segment at Val53–Leu77 threads the bilayer. Residues Cys78–Gln80 lie on the Lumenal side of the membrane. A helical transmembrane segment spans residues Val81–Leu102. Residues Gly103–Gln107 are Cytoplasmic-facing. The stretch at Ser108 to Gly115 is an intramembrane region. The chain crosses the membrane as a helical span at residues Lys116–Ala128. Residues Gly129 to Pro161 are Lumenal-facing.

The protein belongs to the MAPEG family. In terms of assembly, homotrimer. Interacts with LTC4S and ALOX5.

It is found in the nucleus membrane. It localises to the endoplasmic reticulum membrane. Functionally, required for leukotriene biosynthesis by ALOX5 (5-lipoxygenase). Anchors ALOX5 to the membrane. Binds arachidonic acid, and could play an essential role in the transfer of arachidonic acid to ALOX5. Binds to MK-886, a compound that blocks the biosynthesis of leukotrienes. The chain is Arachidonate 5-lipoxygenase-activating protein (ALOX5AP) from Bos taurus (Bovine).